The chain runs to 127 residues: MAQSVPPGDIQTQPGTKIVFNAPYDDKHTYHIKVINSSARRIGYGIKTINMKRLGVDPPCGVLDPKEAVLLAVSCDAFAFGQEDTNNDRITVEWTNTPDGAAKQFRREWFQGDGMVRRKNLPIEYNP.

N-acetylalanine is present on A2. One can recognise an MSP domain in the interval 9 to 126; that stretch reads DIQTQPGTKI…RRKNLPIEYN (118 aa).

In terms of tissue distribution, sperm.

The protein resides in the cell projection. The protein localises to the pseudopodium. Its subcellular location is the cytoplasm. It is found in the cytoskeleton. Functionally, central component in molecular interactions underlying sperm crawling. Forms an extensive filament system that extends from sperm villipoda, along the leading edge of the pseudopod. This chain is Major sperm protein 49 (msp-49), found in Caenorhabditis elegans.